Consider the following 76-residue polypeptide: uncharacterized protein (76 aa).

The protein resides in the plastid. This is an uncharacterized protein from Euglena longa (Euglenophycean alga).